We begin with the raw amino-acid sequence, 216 residues long: 3-isopropylmalate dehydratase small subunit (216 aa).

The protein belongs to the LeuD family. LeuD type 1 subfamily. In terms of assembly, heterodimer of LeuC and LeuD.

It catalyses the reaction (2R,3S)-3-isopropylmalate = (2S)-2-isopropylmalate. Its pathway is amino-acid biosynthesis; L-leucine biosynthesis; L-leucine from 3-methyl-2-oxobutanoate: step 2/4. Catalyzes the isomerization between 2-isopropylmalate and 3-isopropylmalate, via the formation of 2-isopropylmaleate. The sequence is that of 3-isopropylmalate dehydratase small subunit from Burkholderia thailandensis (strain ATCC 700388 / DSM 13276 / CCUG 48851 / CIP 106301 / E264).